The chain runs to 184 residues: Peptide deformylase (184 aa).

C98 and H140 together coordinate Fe cation. Residue E141 is part of the active site. H144 is a Fe cation binding site.

The protein belongs to the polypeptide deformylase family. The cofactor is Fe(2+).

The catalysed reaction is N-terminal N-formyl-L-methionyl-[peptide] + H2O = N-terminal L-methionyl-[peptide] + formate. Functionally, removes the formyl group from the N-terminal Met of newly synthesized proteins. Requires at least a dipeptide for an efficient rate of reaction. N-terminal L-methionine is a prerequisite for activity but the enzyme has broad specificity at other positions. This is Peptide deformylase from Bacteroides fragilis (strain ATCC 25285 / DSM 2151 / CCUG 4856 / JCM 11019 / LMG 10263 / NCTC 9343 / Onslow / VPI 2553 / EN-2).